Here is a 182-residue protein sequence, read N- to C-terminus: Photosystem I assembly protein Ycf4 (182 aa).

The next 2 membrane-spanning stretches (helical) occupy residues 22-42 and 63-83; these read WSSV…SSYL and VMCF…LTIF.

The protein belongs to the Ycf4 family.

It is found in the plastid. Its subcellular location is the chloroplast thylakoid membrane. In terms of biological role, seems to be required for the assembly of the photosystem I complex. This Oltmannsiellopsis viridis (Marine flagellate) protein is Photosystem I assembly protein Ycf4.